The primary structure comprises 405 residues: Phosphoglycerate kinase (405 aa).

Residues 24-26, Arg-40, 63-66, Arg-122, and Arg-162 contribute to the substrate site; these read DFN and HLGR. Residues Lys-212, Glu-331, and 361-364 each bind ATP; that span reads GGDS.

Belongs to the phosphoglycerate kinase family. As to quaternary structure, monomer.

It localises to the cytoplasm. It catalyses the reaction (2R)-3-phosphoglycerate + ATP = (2R)-3-phospho-glyceroyl phosphate + ADP. Its pathway is carbohydrate degradation; glycolysis; pyruvate from D-glyceraldehyde 3-phosphate: step 2/5. This is Phosphoglycerate kinase (pgk) from Corynebacterium glutamicum (strain ATCC 13032 / DSM 20300 / JCM 1318 / BCRC 11384 / CCUG 27702 / LMG 3730 / NBRC 12168 / NCIMB 10025 / NRRL B-2784 / 534).